We begin with the raw amino-acid sequence, 167 residues long: MPQQKMRIHGQYVKDLSFENPNSPFLSSSKAPDINVMVNINSAKLEGTKNKEEVNEEKSFHEITLHIEVKATVKDEGIKDGVAFICETKYCGIFSIENLKELSEEEVRQALFIGGPTFLFPFAREIIARVTSSGGFPPLMLDPIDFETMYEQQGQQQKSNGSNSNFN.

It belongs to the SecB family. As to quaternary structure, homotetramer, a dimer of dimers. One homotetramer interacts with 1 SecA dimer.

Its subcellular location is the cytoplasm. One of the proteins required for the normal export of preproteins out of the cell cytoplasm. It is a molecular chaperone that binds to a subset of precursor proteins, maintaining them in a translocation-competent state. It also specifically binds to its receptor SecA. This is Protein-export protein SecB from Wolbachia pipientis wMel.